A 90-amino-acid chain; its full sequence is Probable Fe(2+)-trafficking protein (90 aa).

This sequence belongs to the Fe(2+)-trafficking protein family.

Could be a mediator in iron transactions between iron acquisition and iron-requiring processes, such as synthesis and/or repair of Fe-S clusters in biosynthetic enzymes. The sequence is that of Probable Fe(2+)-trafficking protein from Albidiferax ferrireducens (strain ATCC BAA-621 / DSM 15236 / T118) (Rhodoferax ferrireducens).